Consider the following 187-residue polypeptide: Elongation factor P (187 aa).

The protein belongs to the elongation factor P family.

Its subcellular location is the cytoplasm. The protein operates within protein biosynthesis; polypeptide chain elongation. In terms of biological role, involved in peptide bond synthesis. Stimulates efficient translation and peptide-bond synthesis on native or reconstituted 70S ribosomes in vitro. Probably functions indirectly by altering the affinity of the ribosome for aminoacyl-tRNA, thus increasing their reactivity as acceptors for peptidyl transferase. The polypeptide is Elongation factor P (Paenarthrobacter aurescens (strain TC1)).